The following is a 653-amino-acid chain: ATP-dependent zinc metalloprotease FtsH 1 (653 aa).

Topologically, residues Met1–Ser7 are cytoplasmic. The chain crosses the membrane as a helical span at residues Ala8–Pro28. The Extracellular segment spans residues Gly29–Gly105. The chain crosses the membrane as a helical span at residues Trp106–Leu126. Residues Met127–Ala653 are Cytoplasmic-facing. Gly198–Thr205 lines the ATP pocket. His420 contributes to the Zn(2+) binding site. Glu421 is a catalytic residue. Zn(2+) contacts are provided by His424 and Asp496. The disordered stretch occupies residues Glu603–Ala653. The span at Ser611–Pro620 shows a compositional bias: pro residues.

It in the central section; belongs to the AAA ATPase family. In the C-terminal section; belongs to the peptidase M41 family. Homohexamer. It depends on Zn(2+) as a cofactor.

The protein localises to the cell membrane. In terms of biological role, acts as a processive, ATP-dependent zinc metallopeptidase for both cytoplasmic and membrane proteins. Plays a role in the quality control of integral membrane proteins. This Conexibacter woesei (strain DSM 14684 / CCUG 47730 / CIP 108061 / JCM 11494 / NBRC 100937 / ID131577) protein is ATP-dependent zinc metalloprotease FtsH 1.